The primary structure comprises 203 residues: Ras-like protein 1 (203 aa).

GTP is bound at residue 17-24 (GGGGVGKS). Positions 39–47 (YDPTIEDSY) match the Effector region motif. Residues 64 to 68 (DTAGQ) and 123 to 126 (NKCD) each bind GTP. The residue at position 200 (Cys-200) is a Cysteine methyl ester. Cys-200 is lipidated: S-farnesyl cysteine. The propeptide at 201–203 (ILM) is removed in mature form.

The protein belongs to the small GTPase superfamily. Ras family.

The protein resides in the cell membrane. It catalyses the reaction GTP + H2O = GDP + phosphate + H(+). Alternates between an inactive form bound to GDP and an active form bound to GTP. Activated by a guanine nucleotide-exchange factor (GEF) and inactivated by a GTPase-activating protein (GAP). The polypeptide is Ras-like protein 1 (RAS1) (Mucor circinelloides f. lusitanicus (Mucor racemosus var. lusitanicus)).